The primary structure comprises 412 residues: Membrane fusion protein MtrC (412 aa).

The signal sequence occupies residues 1 to 24 (MAFYASKAMRAAALAAAVALALSS). Cys-25 carries N-palmitoyl cysteine lipidation. The S-diacylglycerol cysteine moiety is linked to residue Cys-25. A disordered region spans residues 377–412 (AKKVTPKEWAPSENQAAAPQAGVQTASEAKPASEAK). Over residues 388–403 (SENQAAAPQAGVQTAS) the composition is skewed to polar residues.

The protein belongs to the membrane fusion protein (MFP) (TC 8.A.1) family.

It is found in the cell inner membrane. Cell membrane lipoprotein, involved in cell membrane permeability to hydrophobic compounds such as antibiotics, dyes and detergents. The chain is Membrane fusion protein MtrC (mtrC) from Neisseria gonorrhoeae.